The following is a 150-amino-acid chain: D-aminoacyl-tRNA deacylase (150 aa).

The short motif at 138-139 (GP) is the Gly-cisPro motif, important for rejection of L-amino acids element.

The protein belongs to the DTD family. Homodimer.

The protein resides in the cytoplasm. It carries out the reaction glycyl-tRNA(Ala) + H2O = tRNA(Ala) + glycine + H(+). The catalysed reaction is a D-aminoacyl-tRNA + H2O = a tRNA + a D-alpha-amino acid + H(+). Its function is as follows. An aminoacyl-tRNA editing enzyme that deacylates mischarged D-aminoacyl-tRNAs. Also deacylates mischarged glycyl-tRNA(Ala), protecting cells against glycine mischarging by AlaRS. Acts via tRNA-based rather than protein-based catalysis; rejects L-amino acids rather than detecting D-amino acids in the active site. By recycling D-aminoacyl-tRNA to D-amino acids and free tRNA molecules, this enzyme counteracts the toxicity associated with the formation of D-aminoacyl-tRNA entities in vivo and helps enforce protein L-homochirality. The sequence is that of D-aminoacyl-tRNA deacylase from Sorangium cellulosum (strain So ce56) (Polyangium cellulosum (strain So ce56)).